Consider the following 603-residue polypeptide: Laccase 1 (603 aa).

The signal sequence occupies residues 1-20 (MSRFARLLLIVALFFTNAWA). 2 Plastocyanin-like domains span residues 66-108 (QRPI…IHIR) and 159-349 (LVVS…MRIP). Residues H90 and H92 each coordinate Cu cation. Residues N246, N269, N434, and N474 are each glycosylated (N-linked (GlcNAc...) asparagine). The Plastocyanin-like 3 domain maps to 460–588 (TRDTENDGLV…GGMGIAILDG (129 aa)). Residues H496, H499, and H501 each contribute to the Cu cation site. N-linked (GlcNAc...) asparagine glycosylation occurs at N516. Cu cation is bound by residues H570, C571, H572, and H576.

The protein belongs to the multicopper oxidase family. The cofactor is Cu cation.

It is found in the cell surface. The protein operates within pigment biosynthesis. In terms of biological role, laccase; part of the Pks1 gene cluster that mediates the biosynthesis of an anthraquinone derivative pigment that contributes to conidial pigmentation that provides protection from UV radiation, heat and cold stress. The polyketide synthase Pks1 produces 1-acetyl-2,4,6,8-tetrahydroxy-9,10-anthraquinone though condensation of acetyl-CoA with malonyl-CoA. The dehydratase EthD and the laccase Mlac1 further convert the anthraquinone derivative into the final conidial pigment. This is Laccase 1 from Metarhizium anisopliae (Entomophthora anisopliae).